The following is a 340-amino-acid chain: Anthranilate phosphoribosyltransferase (340 aa).

Residues Gly79, 82–83, Thr87, 89–92, 107–115, and Ser119 contribute to the 5-phospho-alpha-D-ribose 1-diphosphate site; these read GD, NIST, and KHGNRAVTG. Gly79 is an anthranilate binding site. Mg(2+) is bound at residue Ser91. Asn110 contacts anthranilate. Arg165 lines the anthranilate pocket. Mg(2+)-binding residues include Asp224 and Glu225.

It belongs to the anthranilate phosphoribosyltransferase family. Homodimer. Requires Mg(2+) as cofactor.

The enzyme catalyses N-(5-phospho-beta-D-ribosyl)anthranilate + diphosphate = 5-phospho-alpha-D-ribose 1-diphosphate + anthranilate. The protein operates within amino-acid biosynthesis; L-tryptophan biosynthesis; L-tryptophan from chorismate: step 2/5. Functionally, catalyzes the transfer of the phosphoribosyl group of 5-phosphorylribose-1-pyrophosphate (PRPP) to anthranilate to yield N-(5'-phosphoribosyl)-anthranilate (PRA). This chain is Anthranilate phosphoribosyltransferase, found in Syntrophomonas wolfei subsp. wolfei (strain DSM 2245B / Goettingen).